We begin with the raw amino-acid sequence, 311 residues long: Putative S-adenosyl-L-methionine-dependent methyltransferase MUL_4761 (311 aa).

S-adenosyl-L-methionine is bound by residues Asp-132 and 161–162 (DL).

The protein belongs to the UPF0677 family.

Functionally, exhibits S-adenosyl-L-methionine-dependent methyltransferase activity. The chain is Putative S-adenosyl-L-methionine-dependent methyltransferase MUL_4761 from Mycobacterium ulcerans (strain Agy99).